We begin with the raw amino-acid sequence, 465 residues long: A-type ATP synthase subunit B (465 aa).

It belongs to the ATPase alpha/beta chains family. In terms of assembly, has multiple subunits with at least A(3), B(3), C, D, E, F, H, I and proteolipid K(x).

The protein localises to the cell membrane. Its function is as follows. Component of the A-type ATP synthase that produces ATP from ADP in the presence of a proton gradient across the membrane. The B chain is a regulatory subunit. This Thermococcus onnurineus (strain NA1) protein is A-type ATP synthase subunit B.